A 330-amino-acid chain; its full sequence is Ketol-acid reductoisomerase (NADP(+)) (330 aa).

The KARI N-terminal Rossmann domain occupies 2–182 (VKVYYDADAN…GCTKAGVFET (181 aa)). NADP(+)-binding positions include 25-28 (YGSQ), R48, S51, and 83-86 (DEIQ). H108 is an active-site residue. NADP(+) is bound at residue G134. The KARI C-terminal knotted domain occupies 183–328 (SFREETETDL…ARLREMMPWL (146 aa)). The Mg(2+) site is built by D191, E195, E227, and E231. Substrate is bound at residue S252.

This sequence belongs to the ketol-acid reductoisomerase family. Mg(2+) is required as a cofactor.

The enzyme catalyses (2R)-2,3-dihydroxy-3-methylbutanoate + NADP(+) = (2S)-2-acetolactate + NADPH + H(+). The catalysed reaction is (2R,3R)-2,3-dihydroxy-3-methylpentanoate + NADP(+) = (S)-2-ethyl-2-hydroxy-3-oxobutanoate + NADPH + H(+). The protein operates within amino-acid biosynthesis; L-isoleucine biosynthesis; L-isoleucine from 2-oxobutanoate: step 2/4. It participates in amino-acid biosynthesis; L-valine biosynthesis; L-valine from pyruvate: step 2/4. In terms of biological role, involved in the biosynthesis of branched-chain amino acids (BCAA). Catalyzes an alkyl-migration followed by a ketol-acid reduction of (S)-2-acetolactate (S2AL) to yield (R)-2,3-dihydroxy-isovalerate. In the isomerase reaction, S2AL is rearranged via a Mg-dependent methyl migration to produce 3-hydroxy-3-methyl-2-ketobutyrate (HMKB). In the reductase reaction, this 2-ketoacid undergoes a metal-dependent reduction by NADPH to yield (R)-2,3-dihydroxy-isovalerate. The polypeptide is Ketol-acid reductoisomerase (NADP(+)) (Desulforamulus reducens (strain ATCC BAA-1160 / DSM 100696 / MI-1) (Desulfotomaculum reducens)).